Here is a 667-residue protein sequence, read N- to C-terminus: MQGQKNSVEQLADVFGFDHASSSGNPVMDQQGYWNNILGSVESHNLQGYQVNRSDGTIPYGNGVHQNGTFLGFWESGEASASGSSLHFGGSNEIKAEQRNIGGGLRIGERRLVAERNLSLDNVDIGLNINGNDLSGENSNVNGASQGSELHGGCSHTGSNGQASELRLHPYRTFILGADQPEPFNSLNGSENPLGDFSLMPEGIDQRPGSSLDGRRLACKRKNIEGVNGQCSAGASTSFSHRNDSIFHNIASSSHNPSPSTNLPSPNCLLVPSTLDEQLPRYGATTAGLSSSSYDPSGGNNNSGGSQRSFRPRTSLAQHIGPYGVWPSSSTIRHSNSWNHQPPPFQSSFDEPPEVIPVVSSLNFQYQHPMNVVPGIPQMSHRFTGPGASSSRTGNLENRIIGSEEFSARNVVATSFPDAVPPAALDMRHLIPEPSSWNVDGRATTIPGNVPSSSRANTNSMVNPPAGSPFIAHQNLHRRNPRNLSEEISRLSGALRGHQHPRLRSGFLLERQGDGVWGVPLSTRSREGRRLIEIRNALEMIHRGENVRFESIFYGGVDIHDRHRDMRLDIDNMSYEELLALEERIGNVSTGLSEEEVTKLLKQRKFSSWRLEASVEEEPCCICQEEYVDGDDLGTLDCGHDFHVGCVRQWLVVKNTCPICKNTALKS.

2 disordered regions span residues 142-163 and 285-311; these read NGASQGSELHGGCSHTGSNGQA and TTAGLSSSSYDPSGGNNNSGGSQRSFR. The span at 288 to 309 shows a compositional bias: low complexity; it reads GLSSSSYDPSGGNNNSGGSQRS. The segment at 620-661 adopts an RING-type; atypical zinc-finger fold; that stretch reads CCICQEEYVDGDDLGTLDCGHDFHVGCVRQWLVVKNTCPICK.

Belongs to the RING-type zinc finger family. As to quaternary structure, interacts with HAL3.

It catalyses the reaction S-ubiquitinyl-[E2 ubiquitin-conjugating enzyme]-L-cysteine + [acceptor protein]-L-lysine = [E2 ubiquitin-conjugating enzyme]-L-cysteine + N(6)-ubiquitinyl-[acceptor protein]-L-lysine.. The protein operates within protein modification; protein ubiquitination. Probable E3 ubiquitin-protein ligase that functions downstream of HAL3 and is required for HAL3-regulated plant growth. Activation of HIP1 by HAL3 may lead to the degradation of cell cycle suppressors, resulting in enhancement of cell division and plant growth. In Oryza sativa subsp. japonica (Rice), this protein is Probable E3 ubiquitin-protein ligase HIP1 (HIP1).